The following is a 127-amino-acid chain: Small ribosomal subunit protein uS11 (127 aa).

The protein belongs to the universal ribosomal protein uS11 family. As to quaternary structure, part of the 30S ribosomal subunit. Interacts with proteins S7 and S18. Binds to IF-3.

Located on the platform of the 30S subunit, it bridges several disparate RNA helices of the 16S rRNA. Forms part of the Shine-Dalgarno cleft in the 70S ribosome. The protein is Small ribosomal subunit protein uS11 of Streptococcus suis (strain 98HAH33).